The following is a 591-amino-acid chain: Mono(ADP-ribosyl)transferase SpvB (591 aa).

The TR mART core domain occupies 373 to 576; that stretch reads PMMGGNSSRP…LRLSDDATAD (204 aa). Residues R414 and 471–477 contribute to the NAD(+) site; that span reads RGLKLDK. Active-site residues include R471, S501, and E538. E538 serves as a coordination point for NAD(+).

The protein belongs to the SpvB family.

The protein resides in the secreted. The enzyme catalyses L-arginyl-[protein] + NAD(+) = N(omega)-(ADP-D-ribosyl)-L-arginyl-[protein] + nicotinamide + H(+). Inhibited by novobiocin. Mono-ADP-ribosylates eukaryotic muscle and non-muscle actin on 'Arg-177'. ADP-ribosylates all actins tested, has more activity on nonmuscle beta/gamma-actin than on muscle alpha-actin. Prefers monomeric G-actin but can weakly ADP-ribosylate F-actin. ADP-ribosylation prevents the polymerization of G-actin to F-actin, causing actin filament depolymerization, destruction of the cytoskeleton and cytotoxicity. Does not possess NAD(+)-glycohydrolase activity, unlike most mART enzymes. The protein is Mono(ADP-ribosyl)transferase SpvB (spvB) of Salmonella typhimurium.